The chain runs to 129 residues: MSYAIIETGGKQIRVEPGRYYDIELLPVDEQSTHTIDKVLLIHDEDDISIGQPFIEGATVEGTVIQHRRGKKVIVYKMRPKKKTRKKRGHRQEITRFMIDSINYNGKTLVATAATSSAEVVEDSSDEEE.

This sequence belongs to the bacterial ribosomal protein bL21 family. In terms of assembly, part of the 50S ribosomal subunit. Contacts protein L20.

Its function is as follows. This protein binds to 23S rRNA in the presence of protein L20. This Microcystis aeruginosa (strain NIES-843 / IAM M-2473) protein is Large ribosomal subunit protein bL21.